The sequence spans 169 residues: N-alpha-acetyltransferase 50 (169 aa).

One can recognise an N-acetyltransferase domain in the interval 6–155; sequence IELGDVTPHN…DAHVLQKNLK (150 aa). Thr12 carries the post-translational modification Phosphothreonine. Tyr31 lines the substrate pocket. Residues Lys34 and Lys37 each carry the N6-acetyllysine modification. Tyr73 is a catalytic residue. Met75 provides a ligand contact to substrate. Acetyl-CoA is bound at residue 77-90; the sequence is LGCLAPYRRLGIGT. Tyr110 carries the phosphotyrosine modification. The active site involves His112. Residue 117–126 participates in CoA binding; it reads NESAIDFYRK. A substrate region spans residues 138-141; the sequence is YYKR. Position 140 is an N6-acetyllysine (Lys140).

The protein belongs to the acetyltransferase family. GNAT subfamily. As to quaternary structure, component of the N-terminal acetyltransferase E (NatE) complex at least composed of NAA10, NAA15 and NAA50. Interacts with NAA10. Interacts with NAA15. Predominantly interacts with NAA15 in the N-terminal acetyltransferase A complex (NatA complex); the interactions reduce the acetylation activity of the NatA complex. Component of the N-terminal acetyltransferase E (NatE)/HYPK complex at least composed of NAA10, NAA15, NAA50 and HYPK. Within the complex interacts with NAA15. Its capacity to interact with the NatA complex is reduced by HYPK. Interacts with NAA35.

It localises to the cytoplasm. It is found in the nucleus. It carries out the reaction N-terminal L-methionyl-L-alanyl-[protein] + acetyl-CoA = N-terminal N(alpha)-acetyl-L-methionyl-L-alanyl-[protein] + CoA + H(+). It catalyses the reaction N-terminal L-methionyl-L-seryl-[protein] + acetyl-CoA = N-terminal N(alpha)-acetyl-L-methionyl-L-seryl-[protein] + CoA + H(+). The enzyme catalyses N-terminal L-methionyl-L-valyl-[protein] + acetyl-CoA = N-terminal N(alpha)-acetyl-L-methionyl-L-valyl-[protein] + CoA + H(+). The catalysed reaction is N-terminal L-methionyl-L-threonyl-[protein] + acetyl-CoA = N-terminal N(alpha)-acetyl-L-methionyl-L-threonyl-[protein] + CoA + H(+). It carries out the reaction N-terminal L-methionyl-L-lysyl-[protein] + acetyl-CoA = N-terminal N(alpha)-acetyl-L-methionyl-L-lysyl-[protein] + CoA + H(+). It catalyses the reaction N-terminal L-methionyl-L-leucyl-[protein] + acetyl-CoA = N-terminal N(alpha)-acetyl-L-methionyl-L-leucyl-[protein] + CoA + H(+). The enzyme catalyses N-terminal L-methionyl-L-phenylalanyl-[protein] + acetyl-CoA = N-terminal N(alpha)-acetyl-L-methionyl-L-phenylalanyl-[protein] + CoA + H(+). The catalysed reaction is N-terminal L-methionyl-L-tyrosyl-[protein] + acetyl-CoA = N-terminal N(alpha)-acetyl-L-methionyl-L-tyrosyl-[protein] + CoA + H(+). Its function is as follows. N-alpha-acetyltransferase that acetylates the N-terminus of proteins that retain their initiating methionine. Has a broad substrate specificity: able to acetylate the initiator methionine of most peptides, except for those with a proline in second position. Also displays N-epsilon-acetyltransferase activity by mediating acetylation of the side chain of specific lysines on proteins. Autoacetylates in vivo. The relevance of N-epsilon-acetyltransferase activity is however unclear: able to acetylate H4 in vitro, but this result has not been confirmed in vivo. Component of N-alpha-acetyltransferase complexes containing NAA10 and NAA15, which has N-alpha-acetyltransferase activity. Does not influence the acetyltransferase activity of NAA10. However, it negatively regulates the N-alpha-acetyltransferase activity of the N-terminal acetyltransferase A complex (also called the NatA complex). The multiprotein complexes probably constitute the major contributor for N-terminal acetylation at the ribosome exit tunnel, with NAA10 acetylating all amino termini that are devoid of methionine and NAA50 acetylating other peptides. Required for sister chromatid cohesion during mitosis by promoting binding of CDCA5/sororin to cohesin: may act by counteracting the function of NAA10. The chain is N-alpha-acetyltransferase 50 from Mus musculus (Mouse).